The primary structure comprises 220 residues: Dual specificity phosphatase 29 (220 aa).

Residues 1–15 are compositionally biased toward polar residues; the sequence is MTSGEVKTSLKNAYS. Residues 1–29 are disordered; sequence MTSGEVKTSLKNAYSSAKRLSPKMEEEGE. A Tyrosine-protein phosphatase domain is found at 54-202; it reads HVNEVWPKLY…LRELDKQLVQ (149 aa). 146-153 contributes to the substrate binding site; sequence HCVMGRSR. The Phosphocysteine intermediate role is filled by C147.

The protein belongs to the protein-tyrosine phosphatase family. Non-receptor class dual specificity subfamily. Homodimer. Interacts with PRKAA2.

The protein localises to the cytoplasm. The protein resides in the nucleus. The catalysed reaction is O-phospho-L-tyrosyl-[protein] + H2O = L-tyrosyl-[protein] + phosphate. The enzyme catalyses O-phospho-L-seryl-[protein] + H2O = L-seryl-[protein] + phosphate. It carries out the reaction O-phospho-L-threonyl-[protein] + H2O = L-threonyl-[protein] + phosphate. Dual specificity phosphatase able to dephosphorylate phosphotyrosine, phosphoserine and phosphothreonine residues within the same substrate, with a preference for phosphotyrosine as a substrate. Involved in the modulation of intracellular signaling cascades. In skeletal muscle regulates systemic glucose homeostasis by activating, AMPK, an energy sensor protein kinase. Affects MAP kinase signaling though modulation of the MAPK1/2 cascade in skeletal muscle promoting muscle cell differentiation, development and atrophy. This chain is Dual specificity phosphatase 29, found in Homo sapiens (Human).